Here is a 117-residue protein sequence, read N- to C-terminus: Large ribosomal subunit protein bL20 (117 aa).

The protein belongs to the bacterial ribosomal protein bL20 family.

Binds directly to 23S ribosomal RNA and is necessary for the in vitro assembly process of the 50S ribosomal subunit. It is not involved in the protein synthesizing functions of that subunit. This chain is Large ribosomal subunit protein bL20, found in Geobacter sulfurreducens (strain ATCC 51573 / DSM 12127 / PCA).